Here is a 326-residue protein sequence, read N- to C-terminus: MDQAKGKVCVTGASGFLASWLVKRLLLEGYEVIGTVRDPGNEKKLAHLWKLEGAKERLRLVKADLMEEGSFDNAIMGCQGVFHTASPVLKPTSNPEEEILRPAIEGTLNVLRSCRKNPSLKRVVLTSSSSTVRIRDDFDPKIPLDESIWTSVELCKRFQVWYALSKTLAEQAAWKFSEENGIDLVTVLPSFLVGPSLPPDLCSTASDVLGLLKGETEKFQWHGQMGYVHIDDVARTHIVVFEHEAAQGRYICSSNVISLEELVSFLSARYPSLPIPKRFEKLNRLHYDFDTSKIQSLGLKFKSLEEMFDDCIASLVEQGYLSTVLP.

NADP(+) contacts are provided by residues 8-32 (VCVTGASGFLASWLVKRLLLEGYEV), K44, and Y162.

The protein belongs to the NAD(P)-dependent epimerase/dehydratase family. Dihydroflavonol-4-reductase subfamily. As to quaternary structure, interacts with 4CLL1/ACOS5, PKSA and PKSB. As to expression, specifically expressed in anther tapetal cells during microspores development.

It is found in the cytoplasm. The protein resides in the nucleus. It localises to the endoplasmic reticulum. In terms of biological role, involved in the biosynthesis of hydroxylated tetraketide compounds that serve as sporopollenin precursors (the main constituents of exine). Is essential for pollen wall development. Acts on tetraketide alpha-pyrones and reduces the carbonyl function on the tetraketide alkyl chain to a secondary alcohol function. This Arabidopsis thaliana (Mouse-ear cress) protein is Tetraketide alpha-pyrone reductase 1 (TKPR1).